Here is a 553-residue protein sequence, read N- to C-terminus: Solute carrier family 22 member 12 (553 aa).

The helical transmembrane segment at 9–29 (LVGGLGRFQVLQTMALMVSIM) threads the bilayer. N56 and N102 each carry an N-linked (GlcNAc...) asparagine glycan. 11 helical membrane passes run 146 to 166 (PMAQSIYLAGILVGAAACGPA), 174 to 194 (LVLTWSYLQMAVMGTAAAFAP), 195 to 215 (AFPVYCLFRFLLAFAVAGVMM), 232 to 252 (LVMTLNSLGFSFGHGLTAAVA), 260 to 280 (LLQLVVSVPFFLCFLYSWWLA), 351 to 371 (CISTLCWFAFGFTFFGLALDL), 378 to 398 (IFLLQMFIGVVDIPAKMGALL), 407 to 427 (PTLAASLLLAGLCILANTLVP), 435 to 455 (SALAVLGLGGVGAAFTCITIY), 466 to 486 (MTAVGLGQMAARGGAILGPLV), and 495 to 515 (WLPLLVYGTVPVLSGLAALLL). T542 carries the phosphothreonine modification.

It belongs to the major facilitator (TC 2.A.1) superfamily. Organic cation transporter (TC 2.A.1.19) family. As to quaternary structure, interacts with PDZK1. In terms of processing, N-glycosylated. Detected in kidney (at protein level). Detected in fetal and adult kidney. Detected in epithelial cells of proximal tubules in renal cortex.

It localises to the apical cell membrane. It catalyses the reaction urate(out) + (S)-lactate(in) = urate(in) + (S)-lactate(out). It carries out the reaction nicotinate(in) + urate(out) = nicotinate(out) + urate(in). The enzyme catalyses urate(out) + n chloride(in) = urate(in) + n chloride(out). The catalysed reaction is orotate(out) + nicotinate(in) = orotate(in) + nicotinate(out). Its function is as follows. Electroneutral antiporter that translocates urate across the apical membrane of proximal tubular cells in exchange for monovalent organic or inorganic anions. Involved in renal reabsorption of urate and helps maintaining blood levels of uric acid. Mediates urate uptake by an exchange with organic anions such as (S)-lactate and nicotinate, and inorganic anion Cl(-). Other inorganic anions such as Br(-), I(-) and NO3(-) may also act as counteranions that exchange for urate. Also mediates orotate tubular uptake coupled with nicotinate efflux and to a lesser extent with lactate efflux, therefore displaying a potential role in orotate renal reabsorption. Orotate transport is Cl(-)-dependent. The chain is Solute carrier family 22 member 12 from Homo sapiens (Human).